A 301-amino-acid chain; its full sequence is NAD kinase (301 aa).

Catalysis depends on Asp73, which acts as the Proton acceptor. Residues 73-74, 160-161, Arg188, Asp190, Ala198, 201-206, Ala225, and Gln257 each bind NAD(+); these read DG, NE, and TAYNIS.

Belongs to the NAD kinase family. The cofactor is a divalent metal cation.

It is found in the cytoplasm. The catalysed reaction is NAD(+) + ATP = ADP + NADP(+) + H(+). In terms of biological role, involved in the regulation of the intracellular balance of NAD and NADP, and is a key enzyme in the biosynthesis of NADP. Catalyzes specifically the phosphorylation on 2'-hydroxyl of the adenosine moiety of NAD to yield NADP. The polypeptide is NAD kinase (Helicobacter hepaticus (strain ATCC 51449 / 3B1)).